We begin with the raw amino-acid sequence, 692 residues long: ATP-dependent DNA helicase DinG (692 aa).

In terms of domain architecture, Helicase ATP-binding spans 16–293; the sequence is NLGNQLDNFI…AELAEYKKAA (278 aa). 56-63 is a binding site for ATP; the sequence is AGTGIGKS. A [4Fe-4S] cluster-binding site is contributed by C123. Positions 134–137 match the DEAH box motif; sequence NNDQ. Positions 192 and 202 each coordinate [4Fe-4S] cluster. The short motif at 247 to 250 is the DEAH box element; that stretch reads DEAH. One can recognise a Helicase C-terminal domain in the interval 514-692; sequence LIKTLPEYLE…PPFKRVIEYS (179 aa).

It belongs to the helicase family. DinG subfamily. Type 1 sub-subfamily. Requires [4Fe-4S] cluster as cofactor.

It carries out the reaction Couples ATP hydrolysis with the unwinding of duplex DNA at the replication fork by translocating in the 5'-3' direction. This creates two antiparallel DNA single strands (ssDNA). The leading ssDNA polymer is the template for DNA polymerase III holoenzyme which synthesizes a continuous strand.. The catalysed reaction is ATP + H2O = ADP + phosphate + H(+). Functionally, DNA-dependent ATPase and 5'-3' DNA helicase. Unwinds D-loops, R-loops, forked DNA and G-quadruplex DNA. This chain is ATP-dependent DNA helicase DinG, found in Photobacterium profundum (strain SS9).